The primary structure comprises 122 residues: Large ribosomal subunit protein uL14 (122 aa).

This sequence belongs to the universal ribosomal protein uL14 family. As to quaternary structure, part of the 50S ribosomal subunit. Forms a cluster with proteins L3 and L19. In the 70S ribosome, L14 and L19 interact and together make contacts with the 16S rRNA in bridges B5 and B8.

Functionally, binds to 23S rRNA. Forms part of two intersubunit bridges in the 70S ribosome. The sequence is that of Large ribosomal subunit protein uL14 from Clostridium botulinum (strain Alaska E43 / Type E3).